The sequence spans 509 residues: Glycogen synthase 2 (509 aa).

Lysine 15 contacts ADP-alpha-D-glucose.

This sequence belongs to the glycosyltransferase 1 family. Bacterial/plant glycogen synthase subfamily.

The catalysed reaction is [(1-&gt;4)-alpha-D-glucosyl](n) + ADP-alpha-D-glucose = [(1-&gt;4)-alpha-D-glucosyl](n+1) + ADP + H(+). Its pathway is glycan biosynthesis; glycogen biosynthesis. Its function is as follows. Synthesizes alpha-1,4-glucan chains using ADP-glucose. The polypeptide is Glycogen synthase 2 (glgA2) (Agrobacterium fabrum (strain C58 / ATCC 33970) (Agrobacterium tumefaciens (strain C58))).